Consider the following 287-residue polypeptide: MRTLAIDIGGTKIALAIVEEGTIIQRYQIATPVVQDVTKFVQAILEKVTEWLPSIDYVGVSTTGYVTPEGITSINPETLNFPVPFPLAQTLEQLTNKPVSILNDAQAAAWFEFVQLKNPSLNMAFITVSTGVGGGIIIDGKLHKGNSGLAGHIGHMSVAIEGPLCGCGQRGCVESMASGNAIQKESEATFTETMSNVELFKQAAFNPKAEAIINRSVQAVATLCCNLKACLDLDIIVLGGGIGLAEGYLERLNKAIQSRPSVFHIPVTPAHGDYDACLLGAAFQFKE.

ATP contacts are provided by residues 5–12 (AIDIGGTK) and 131–138 (GVGGGIII). Residues His-155, Cys-165, Cys-167, and Cys-172 each contribute to the Zn(2+) site.

The protein belongs to the ROK (NagC/XylR) family. NanK subfamily. In terms of assembly, homodimer.

The catalysed reaction is an N-acyl-D-mannosamine + ATP = an N-acyl-D-mannosamine 6-phosphate + ADP + H(+). It participates in amino-sugar metabolism; N-acetylneuraminate degradation; D-fructose 6-phosphate from N-acetylneuraminate: step 2/5. Its function is as follows. Catalyzes the phosphorylation of N-acetylmannosamine (ManNAc) to ManNAc-6-P. This Vibrio cholerae serotype O1 (strain ATCC 39541 / Classical Ogawa 395 / O395) protein is N-acetylmannosamine kinase.